The primary structure comprises 494 residues: Zinc metalloproteinase/disintegrin (494 aa).

A signal peptide spans 1-20; the sequence is MIQVLLVTICLAVFPFQGSS. A propeptide spanning residues 21 to 193 is cleaved from the precursor; the sequence is KTLKSGNVND…KKASHLVATS (173 aa). A Peptidase M12B domain is found at 201 to 396; that stretch reads RYVQLVIVAD…HNPPCILNQA (196 aa). 3 cysteine pairs are disulfide-bonded: Cys311-Cys391, Cys351-Cys375, and Cys353-Cys358. His336 contributes to the Zn(2+) binding site. Residue Glu337 is part of the active site. Residues His340 and His346 each contribute to the Zn(2+) site. Positions 410–431 are excised as a propeptide; the sequence is ELLQNSVNPCYDPVTCQPKEKE. One can recognise a Disintegrin domain in the interval 417-478; sequence NPCYDPVTCQ…DCPRNPYKGE (62 aa). 4 disulfide bridges follow: Cys433-Cys442, Cys438-Cys463, Cys439-Cys468, and Cys451-Cys470. The Cell attachment site motif lies at 455–457; it reads RGD. Positions 482-494 are excised as a propeptide; that stretch reads MEWPAPAKGSVLM.

The protein belongs to the venom metalloproteinase (M12B) family. P-II subfamily. P-IIa sub-subfamily. Monomer (disintegrin). As to expression, expressed by the venom gland.

The protein resides in the secreted. Impairs hemostasis in the envenomed animal. Functionally, inhibits ADP-induced platelet aggregation (IC(50)=168 nM). Inhibits alpha-5/beta-1 (ITGA5/ITGB1) integrin and induces the expression of a ligand-induced binding site epitope on beta-1 integrin subunit. Has a direct chemotactic stimulus on human neutrophils in vitro. The polypeptide is Zinc metalloproteinase/disintegrin (Echis ocellatus (Ocellated saw-scaled viper)).